A 515-amino-acid polypeptide reads, in one-letter code: Microtubule-associated protein 70-4 (515 aa).

2 coiled-coil regions span residues 26 to 106 and 136 to 351; these read VVDE…ALSA and LESD…NTSA. The segment at 208–410 is required for targeting to microtubules; it reads LLEKSNRQQV…KQPGSETEAA (203 aa). Residues 340-515 form a disordered region; the sequence is DDMRNESSNT…VKSTKDSCEI (176 aa). Over residues 345 to 362 the composition is skewed to polar residues; it reads ESSNTSASNKDNATSKQA. Residues 364 to 374 are compositionally biased toward low complexity; it reads PKRSSSQPRRP. Basic and acidic residues-rich tracts occupy residues 409–425, 450–461, and 484–515; these read AAEKNRHAAAKRFDSPR, KVADDAGKENKE, and SEHEEAMDLRKLDEGKADDSDAVKSTKDSCEI.

It belongs to the MAP70 family.

It localises to the cytoplasm. The protein localises to the cytoskeleton. Functionally, plant-specific protein that interact with microtubules. This Oryza sativa subsp. japonica (Rice) protein is Microtubule-associated protein 70-4 (MAP70.4).